An 83-amino-acid chain; its full sequence is Polcalcin Bra r 2 (83 aa).

EF-hand domains are found at residues 5 to 40 and 43 to 75; these read TEKA…LGSV and DDIK…NRGL. Ca(2+) is bound by residues Asp-18, Asn-20, Asp-22, Lys-24, Glu-29, Asp-53, Asp-55, Asp-57, Tyr-59, and Glu-64.

The protein is Polcalcin Bra r 2 of Brassica campestris (Field mustard).